The chain runs to 279 residues: Ribosomal RNA small subunit methyltransferase A (279 aa).

S-adenosyl-L-methionine is bound by residues N28, L30, G55, E77, D103, and N122.

Belongs to the class I-like SAM-binding methyltransferase superfamily. rRNA adenine N(6)-methyltransferase family. RsmA subfamily.

It is found in the cytoplasm. It carries out the reaction adenosine(1518)/adenosine(1519) in 16S rRNA + 4 S-adenosyl-L-methionine = N(6)-dimethyladenosine(1518)/N(6)-dimethyladenosine(1519) in 16S rRNA + 4 S-adenosyl-L-homocysteine + 4 H(+). Specifically dimethylates two adjacent adenosines (A1518 and A1519) in the loop of a conserved hairpin near the 3'-end of 16S rRNA in the 30S particle. May play a critical role in biogenesis of 30S subunits. This Ruegeria pomeroyi (strain ATCC 700808 / DSM 15171 / DSS-3) (Silicibacter pomeroyi) protein is Ribosomal RNA small subunit methyltransferase A.